The sequence spans 357 residues: 5-hydroxytryptamine receptor 5A (357 aa).

Residues 1–36 are Extracellular-facing; the sequence is MDLPVNLTSFSLSTPSPLETNHSLGKDDLRPSSPLL. N-linked (GlcNAc...) asparagine glycans are attached at residues asparagine 6 and asparagine 21. The helical transmembrane segment at 37 to 63 threads the bilayer; that stretch reads SVFGVLILTLLGFLVAATFAWNLLVLA. Topologically, residues 64 to 76 are cytoplasmic; it reads TILRVRTFHRVPH. The chain crosses the membrane as a helical span at residues 77 to 103; sequence NLVASMAVSDVLVAALVMPLSLVHELS. The Extracellular segment spans residues 104-114; that stretch reads GRRWQLGRRLC. Residues cysteine 114 and cysteine 192 are joined by a disulfide bond. Residues 115 to 137 form a helical membrane-spanning segment; that stretch reads QLWIACDVLCCTASIWNVTAIAL. Position 121 (aspartate 121) interacts with serotonin. The Cytoplasmic portion of the chain corresponds to 138–155; sequence DRYWSITRHMEYTLRTRK. The chain crosses the membrane as a helical span at residues 156-176; sequence CVSNVMIALTWALSAVISLAP. Residues 177–198 lie on the Extracellular side of the membrane; the sequence is LLFGWGETYSEGSEECQVSREP. A helical membrane pass occupies residues 199 to 220; the sequence is SYAVFSTVGAFYLPLCVVLFVY. At 221–287 the chain is on the cytoplasmic side; it reads WKIYKAAKFR…QKEQRAALMV (67 aa). Residues 288–312 form a helical membrane-spanning segment; it reads GILIGVFVLCWIPFFLTELISPLCS. Over 313 to 314 the chain is Extracellular; sequence CD. Residues 315–339 form a helical membrane-spanning segment; sequence IPAIWKSIFLWLGYSNSFFNPLIYT. Residues 340-357 are Cytoplasmic-facing; sequence AFNKNYNSAFKNFFSRQH.

The protein belongs to the G-protein coupled receptor 1 family.

Its subcellular location is the cell membrane. Functionally, G-protein coupled receptor for 5-hydroxytryptamine (serotonin), a biogenic hormone that functions as a neurotransmitter, a hormone and a mitogen. Also functions as a receptor for ergot alkaloid derivatives and other psychoactive substances. Ligand binding causes a conformation change that triggers signaling via guanine nucleotide-binding proteins (G proteins) and modulates the activity of downstream effectors. HTR5A is coupled to G(i)/G(o) G alpha proteins and mediates inhibitory neurotransmission: signaling inhibits adenylate cyclase activity and activates a phosphatidylinositol-calcium second messenger system that regulates the release of Ca(2+) ions from intracellular stores. The sequence is that of 5-hydroxytryptamine receptor 5A from Homo sapiens (Human).